We begin with the raw amino-acid sequence, 338 residues long: MSINVNEIVLHQITKSIEGDAMKLNTMLRERLLTITPEVEQMMLQLHQAYQNKSKAYAVFNENSLFAQDLNRFLEHESEFLDFSQKATALLVNELSRYPFADEGTLVLCRYNFLATDYLFIALLDSRASMLVDEQLEIHRTKYLEISQFDIAARLNLTELSLDAKSDRYLTFVKGRVGRKIGDFFMDFLGAEEGLNPQVQNQCLLQAVSDYCAQADLSKEQSQAVKKQVFEYCKGQMNVGEEIALTELSATMPTLNEQAFASFAAEQAYGLAEHIPPVRSALKTLTKFSGSGKGITLSFDAELINQRVFWDEATDSLTIQGLPPNLRDQLQRQLKGQN.

Belongs to the YejK family.

The protein resides in the cytoplasm. The protein localises to the nucleoid. In Pasteurella multocida (strain Pm70), this protein is Nucleoid-associated protein PM1885.